The chain runs to 717 residues: UvrABC system protein C (717 aa).

A GIY-YIG domain is found at 16–95 (DSPGVYKFRD…IKEFDPRFNV (80 aa)). The UVR domain maps to 208 to 243 (GTYIRRLEKDMMQAAEEMEYERAARLRDDAEALKRA). Positions 467–548 (ERTGEWEEAP…PREDDGRPKR (82 aa)) are disordered. The segment covering 477 to 522 (EAAPGSASVHASATGPAATGQATAGPAAMGQAAAGPVSTGPAATGP) has biased composition (low complexity).

Belongs to the UvrC family. As to quaternary structure, interacts with UvrB in an incision complex.

It localises to the cytoplasm. Its function is as follows. The UvrABC repair system catalyzes the recognition and processing of DNA lesions. UvrC both incises the 5' and 3' sides of the lesion. The N-terminal half is responsible for the 3' incision and the C-terminal half is responsible for the 5' incision. This is UvrABC system protein C from Streptomyces griseus subsp. griseus (strain JCM 4626 / CBS 651.72 / NBRC 13350 / KCC S-0626 / ISP 5235).